The chain runs to 215 residues: Thymidylate kinase (215 aa).

7 to 14 (GMEGSGKS) contacts ATP.

Belongs to the thymidylate kinase family.

It catalyses the reaction dTMP + ATP = dTDP + ADP. Functionally, phosphorylation of dTMP to form dTDP in both de novo and salvage pathways of dTTP synthesis. The sequence is that of Thymidylate kinase from Nitratidesulfovibrio vulgaris (strain DSM 19637 / Miyazaki F) (Desulfovibrio vulgaris).